The chain runs to 354 residues: Chorismate synthase (354 aa).

R46 serves as a coordination point for NADP(+). FMN is bound by residues 123–125, 239–240, G284, 299–303, and R325; these read RSS, NA, and KPVAT.

This sequence belongs to the chorismate synthase family. Homotetramer. Requires FMNH2 as cofactor.

The enzyme catalyses 5-O-(1-carboxyvinyl)-3-phosphoshikimate = chorismate + phosphate. The protein operates within metabolic intermediate biosynthesis; chorismate biosynthesis; chorismate from D-erythrose 4-phosphate and phosphoenolpyruvate: step 7/7. Its function is as follows. Catalyzes the anti-1,4-elimination of the C-3 phosphate and the C-6 proR hydrogen from 5-enolpyruvylshikimate-3-phosphate (EPSP) to yield chorismate, which is the branch point compound that serves as the starting substrate for the three terminal pathways of aromatic amino acid biosynthesis. This reaction introduces a second double bond into the aromatic ring system. The chain is Chorismate synthase from Azobacteroides pseudotrichonymphae genomovar. CFP2.